Consider the following 888-residue polypeptide: Alanine--tRNA ligase (888 aa).

Zn(2+) is bound by residues His570, His574, Cys673, and His677.

It belongs to the class-II aminoacyl-tRNA synthetase family. Requires Zn(2+) as cofactor.

The protein resides in the cytoplasm. It carries out the reaction tRNA(Ala) + L-alanine + ATP = L-alanyl-tRNA(Ala) + AMP + diphosphate. Its function is as follows. Catalyzes the attachment of alanine to tRNA(Ala) in a two-step reaction: alanine is first activated by ATP to form Ala-AMP and then transferred to the acceptor end of tRNA(Ala). Also edits incorrectly charged Ser-tRNA(Ala) and Gly-tRNA(Ala) via its editing domain. This is Alanine--tRNA ligase from Chlorobium phaeobacteroides (strain DSM 266 / SMG 266 / 2430).